A 217-amino-acid polypeptide reads, in one-letter code: Elongation factor Ts (217 aa).

The involved in Mg(2+) ion dislocation from EF-Tu stretch occupies residues threonine 82 to valine 85.

It belongs to the EF-Ts family.

It is found in the cytoplasm. Functionally, associates with the EF-Tu.GDP complex and induces the exchange of GDP to GTP. It remains bound to the aminoacyl-tRNA.EF-Tu.GTP complex up to the GTP hydrolysis stage on the ribosome. This is Elongation factor Ts from Desulforamulus reducens (strain ATCC BAA-1160 / DSM 100696 / MI-1) (Desulfotomaculum reducens).